The sequence spans 375 residues: MQKLAVYVYIYLFMLISVDPVALDDGSQPTENAEKDGLCNACTWRQNTKSSRIEAIKIQILSKLRLEQAPNISRDVIKQLLPKAPPLQELIDQYDVQRDDSSDGSLEDDDYHATTETIITMPTESDFLVQMEGKPKCCFFKFSSKIQYNKVVKAQLWIYLRQVQKPTTVFVQILRLIKPMKDGTRYTGIRSLKLDIDPGAGFGQSIDVKTVLQNWLKQPESNLGIEIKAFDENGRDLAVTFPGPGEDGLNPFLEVRVTDTPKRSRRDFGLDCDEHSTESRCCRYPLTVDFEAFGWDWIIAPKRYKANYCFGECEFVFLQKYPHTHLVHQANPRGSAGPCCTPTKMSPINMLYFNGKEQIIYGKIPAMVVDRCGCS.

The first 23 residues, 1 to 23, serve as a signal peptide directing secretion; sequence MQKLAVYVYIYLFMLISVDPVAL. The propeptide occupies 24–266; the sequence is DDGSQPTENA…VTDTPKRSRR (243 aa). An N-linked (GlcNAc...) asparagine glycan is attached at asparagine 71. 4 disulfide bridges follow: cysteine 272/cysteine 282, cysteine 281/cysteine 340, cysteine 309/cysteine 372, and cysteine 313/cysteine 374.

This sequence belongs to the TGF-beta family. Homodimer; disulfide-linked.

It is found in the secreted. Acts specifically as a negative regulator of skeletal muscle growth. The protein is Growth/differentiation factor 8 (MSTN) of Anser anser anser (Western greylag goose).